Consider the following 156-residue polypeptide: RNA pyrophosphohydrolase (156 aa).

In terms of domain architecture, Nudix hydrolase spans 6–148 (NYRPNVAAIV…KKNIYVKVIK (143 aa)). The Nudix box motif lies at 43-64 (GGIDKGESAKNALFRELKEEIG).

Belongs to the Nudix hydrolase family. RppH subfamily. A divalent metal cation is required as a cofactor.

Accelerates the degradation of transcripts by removing pyrophosphate from the 5'-end of triphosphorylated RNA, leading to a more labile monophosphorylated state that can stimulate subsequent ribonuclease cleavage. This is RNA pyrophosphohydrolase from Campylobacter jejuni subsp. doylei (strain ATCC BAA-1458 / RM4099 / 269.97).